A 242-amino-acid polypeptide reads, in one-letter code: Probable transcriptional regulatory protein NGO_1291 (242 aa).

It belongs to the TACO1 family.

It is found in the cytoplasm. The sequence is that of Probable transcriptional regulatory protein NGO_1291 from Neisseria gonorrhoeae (strain ATCC 700825 / FA 1090).